A 74-amino-acid polypeptide reads, in one-letter code: Protein translocase subunit SecE (74 aa).

Topologically, residues 1-36 (MKTDFNQKIEQLKEFIEECRRVWLVLKKPTKDEYLA) are cytoplasmic. A helical transmembrane segment spans residues 37 to 62 (VAKVTALGISLLGIIGYIIHVPATYI). Over 63–74 (KGILKPPTTPRV) the chain is Extracellular.

The protein belongs to the SecE/SEC61-gamma family. Component of the Sec protein translocase complex. Heterotrimer consisting of alpha (SecY), beta (SecG) and gamma (SecE) subunits. The heterotrimers can form oligomers, although 1 heterotrimer is thought to be able to translocate proteins. Interacts with the ribosome. May interact with SecDF, and other proteins may be involved.

Its subcellular location is the cell membrane. In terms of biological role, essential subunit of the protein translocation channel SecYEG. Clamps together the 2 halves of SecY. May contact the channel plug during translocation. This Methanocaldococcus jannaschii (strain ATCC 43067 / DSM 2661 / JAL-1 / JCM 10045 / NBRC 100440) (Methanococcus jannaschii) protein is Protein translocase subunit SecE.